We begin with the raw amino-acid sequence, 298 residues long: Protease HtpX homolog (298 aa).

The next 2 membrane-spanning stretches (helical) occupy residues valine 16–tryptophan 36 and serine 38–isoleucine 58. Histidine 144 serves as a coordination point for Zn(2+). Residue glutamate 145 is part of the active site. Zn(2+) is bound at residue histidine 148. 2 consecutive transmembrane segments (helical) span residues isoleucine 159–tryptophan 179 and isoleucine 197–alanine 217. Glutamate 226 is a Zn(2+) binding site.

This sequence belongs to the peptidase M48B family. Zn(2+) is required as a cofactor.

The protein localises to the cell membrane. The sequence is that of Protease HtpX homolog from Levilactobacillus brevis (strain ATCC 367 / BCRC 12310 / CIP 105137 / JCM 1170 / LMG 11437 / NCIMB 947 / NCTC 947) (Lactobacillus brevis).